Here is a 641-residue protein sequence, read N- to C-terminus: Chaperone protein DnaK (641 aa).

A Phosphothreonine; by autocatalysis modification is found at Thr-200. The segment covering 606-623 (AEQGGNADAASGNAQASK) has biased composition (low complexity). The disordered stretch occupies residues 606-627 (AEQGGNADAASGNAQASKAADD).

It belongs to the heat shock protein 70 family.

Acts as a chaperone. The protein is Chaperone protein DnaK of Xanthomonas euvesicatoria pv. vesicatoria (strain 85-10) (Xanthomonas campestris pv. vesicatoria).